Here is a 125-residue protein sequence, read N- to C-terminus: Ribonuclease P protein component (125 aa).

This sequence belongs to the RnpA family. Consists of a catalytic RNA component (M1 or rnpB) and a protein subunit.

The enzyme catalyses Endonucleolytic cleavage of RNA, removing 5'-extranucleotides from tRNA precursor.. RNaseP catalyzes the removal of the 5'-leader sequence from pre-tRNA to produce the mature 5'-terminus. It can also cleave other RNA substrates such as 4.5S RNA. The protein component plays an auxiliary but essential role in vivo by binding to the 5'-leader sequence and broadening the substrate specificity of the ribozyme. This chain is Ribonuclease P protein component, found in Clostridium beijerinckii (strain ATCC 51743 / NCIMB 8052) (Clostridium acetobutylicum).